The chain runs to 340 residues: UDP-glucose 4-epimerase (340 aa).

NAD(+) contacts are provided by residues 12 to 13 (FI), 32 to 37 (DNYGNS), 59 to 60 (DV), 81 to 85 (FAGLK), asparagine 100, serine 125, tyrosine 150, lysine 154, and phenylalanine 179. Positions 125 and 150 each coordinate substrate. Tyrosine 150 serves as the catalytic Proton acceptor. Residues asparagine 180, 200–201 (NL), 217–219 (QVY), arginine 232, and 292–295 (RPGD) each bind substrate.

This sequence belongs to the NAD(P)-dependent epimerase/dehydratase family. Homodimer. Requires NAD(+) as cofactor.

It catalyses the reaction UDP-alpha-D-glucose = UDP-alpha-D-galactose. It functions in the pathway carbohydrate metabolism; galactose metabolism. In terms of biological role, involved in the metabolism of galactose. Catalyzes the conversion of UDP-galactose (UDP-Gal) to UDP-glucose (UDP-Glc) through a mechanism involving the transient reduction of NAD. Can also epimerize UDP-GalNAc to UDP-GlcNAc. Involved in the lacto-N-biose I/galacto-N-biose (LNB/GNB) degradation pathway, which is important for host intestinal colonization by bifidobacteria. The polypeptide is UDP-glucose 4-epimerase (lnpD) (Bifidobacterium longum subsp. longum (strain ATCC 15707 / DSM 20219 / JCM 1217 / NCTC 11818 / E194b)).